The sequence spans 262 residues: Trypsin theta (262 aa).

The first 19 residues, 1–19 (MHRLVVLLVCLAVGSACAG), serve as a signal peptide directing secretion. Residues 20-34 (TVGVSNGDPFEREGR) constitute a propeptide, activation peptide. The Peptidase S1 domain maps to 35 to 260 (IVGGEDTTIG…LRKWILNASE (226 aa)). A disulfide bridge links Cys-61 with Cys-77. Residues His-76 and Asp-121 each act as charge relay system in the active site. Intrachain disulfides connect Cys-186–Cys-203 and Cys-212–Cys-236. Ser-216 acts as the Charge relay system in catalysis.

This sequence belongs to the peptidase S1 family.

The protein resides in the secreted. It localises to the extracellular space. It carries out the reaction Preferential cleavage: Arg-|-Xaa, Lys-|-Xaa.. The sequence is that of Trypsin theta (thetaTry) from Drosophila melanogaster (Fruit fly).